Here is a 155-residue protein sequence, read N- to C-terminus: Large ribosomal subunit protein uL30 (155 aa).

The protein belongs to the universal ribosomal protein uL30 family. As to quaternary structure, part of the 50S ribosomal subunit.

This Pyrococcus furiosus (strain ATCC 43587 / DSM 3638 / JCM 8422 / Vc1) protein is Large ribosomal subunit protein uL30.